Reading from the N-terminus, the 312-residue chain is ADP-L-glycero-D-manno-heptose-6-epimerase (312 aa).

Residues 10-11, 31-32, K38, K53, 75-79, and N92 each bind NADP(+); these read FI, DN, and EGACS. Y140 acts as the Proton acceptor in catalysis. K144 serves as a coordination point for NADP(+). N169 provides a ligand contact to substrate. V170 and K178 together coordinate NADP(+). The Proton acceptor role is filled by K178. Residues S180, H187, 201 to 204, R209, and Y274 contribute to the substrate site; that span reads FAGS.

Belongs to the NAD(P)-dependent epimerase/dehydratase family. HldD subfamily. Homopentamer. The cofactor is NADP(+).

The catalysed reaction is ADP-D-glycero-beta-D-manno-heptose = ADP-L-glycero-beta-D-manno-heptose. Its pathway is nucleotide-sugar biosynthesis; ADP-L-glycero-beta-D-manno-heptose biosynthesis; ADP-L-glycero-beta-D-manno-heptose from D-glycero-beta-D-manno-heptose 7-phosphate: step 4/4. The protein operates within bacterial outer membrane biogenesis; LPS core biosynthesis. In terms of biological role, catalyzes the interconversion between ADP-D-glycero-beta-D-manno-heptose and ADP-L-glycero-beta-D-manno-heptose via an epimerization at carbon 6 of the heptose. The sequence is that of ADP-L-glycero-D-manno-heptose-6-epimerase from Photorhabdus laumondii subsp. laumondii (strain DSM 15139 / CIP 105565 / TT01) (Photorhabdus luminescens subsp. laumondii).